A 157-amino-acid chain; its full sequence is Ribonuclease H (157 aa).

An RNase H type-1 domain is found at 3–144; that stretch reads ELKQLYIFTD…CDVLARKAAE (142 aa). The Mg(2+) site is built by D12, E50, D72, and D136.

Belongs to the RNase H family. In terms of assembly, monomer. Requires Mg(2+) as cofactor.

It is found in the cytoplasm. It catalyses the reaction Endonucleolytic cleavage to 5'-phosphomonoester.. Endonuclease that specifically degrades the RNA of RNA-DNA hybrids. The protein is Ribonuclease H of Shewanella frigidimarina (strain NCIMB 400).